We begin with the raw amino-acid sequence, 362 residues long: Endopolygalacturonase II (362 aa).

The N-terminal stretch at 1–21 is a signal peptide; the sequence is MHSFASLLAYGLVAGATFASA. A propeptide spanning residues 22 to 27 is cleaved from the precursor; the sequence is SPIEAR. Cysteines 30 and 45 form a disulfide. The PbH1 1 repeat unit spans residues 156-186; the sequence is ANDITFTDVTINNADGDTQGGHNTDAFDVGN. Residue Asp-201 is the Proton donor of the active site. A disulfide bond links Cys-203 and Cys-219. PbH1 repeat units lie at residues 209–229, 238–259, 267–289, and 301–322; these read GENIWFTGGTCIGGHGLSIGS, VKNVTIEHSTVSNSENAVRIKT, VSEITYSNIVMSGISDYGVVIQQ, and TNGVTIQDVKLESVTGSVDSGA. The active site involves His-223. Asn-240 carries N-linked (GlcNAc...) (high mannose) asparagine glycosylation. Intrachain disulfides connect Cys-329–Cys-334 and Cys-353–Cys-362.

Belongs to the glycosyl hydrolase 28 family.

The protein resides in the secreted. The catalysed reaction is (1,4-alpha-D-galacturonosyl)n+m + H2O = (1,4-alpha-D-galacturonosyl)n + (1,4-alpha-D-galacturonosyl)m.. Its function is as follows. Involved in maceration and soft-rotting of plant tissue. Hydrolyzes the 1,4-alpha glycosidic bonds of de-esterified pectate in the smooth region of the plant cell wall. This is Endopolygalacturonase II (pgaII) from Aspergillus niger (strain ATCC 1015 / CBS 113.46 / FGSC A1144 / LSHB Ac4 / NCTC 3858a / NRRL 328 / USDA 3528.7).